A 255-amino-acid chain; its full sequence is Large ribosomal subunit protein uL4 (255 aa).

This sequence belongs to the universal ribosomal protein uL4 family. As to quaternary structure, part of the 50S ribosomal subunit.

Its function is as follows. One of the primary rRNA binding proteins, this protein initially binds near the 5'-end of the 23S rRNA. It is important during the early stages of 50S assembly. It makes multiple contacts with different domains of the 23S rRNA in the assembled 50S subunit and ribosome. Forms part of the polypeptide exit tunnel. The protein is Large ribosomal subunit protein uL4 of Pyrococcus horikoshii (strain ATCC 700860 / DSM 12428 / JCM 9974 / NBRC 100139 / OT-3).